The following is a 203-amino-acid chain: Histidine biosynthesis bifunctional protein HisIE (203 aa).

The segment at 1-114 is phosphoribosyl-AMP cyclohydrolase; it reads MLTEQQRREL…FGDASHQWLF (114 aa). The tract at residues 115–203 is phosphoribosyl-ATP pyrophosphohydrolase; that stretch reads LYQLEQLLAE…VIDDLRKRHQ (89 aa).

In the N-terminal section; belongs to the PRA-CH family. This sequence in the C-terminal section; belongs to the PRA-PH family.

It localises to the cytoplasm. It carries out the reaction 1-(5-phospho-beta-D-ribosyl)-ATP + H2O = 1-(5-phospho-beta-D-ribosyl)-5'-AMP + diphosphate + H(+). It catalyses the reaction 1-(5-phospho-beta-D-ribosyl)-5'-AMP + H2O = 1-(5-phospho-beta-D-ribosyl)-5-[(5-phospho-beta-D-ribosylamino)methylideneamino]imidazole-4-carboxamide. The protein operates within amino-acid biosynthesis; L-histidine biosynthesis; L-histidine from 5-phospho-alpha-D-ribose 1-diphosphate: step 2/9. It participates in amino-acid biosynthesis; L-histidine biosynthesis; L-histidine from 5-phospho-alpha-D-ribose 1-diphosphate: step 3/9. In Salmonella typhi, this protein is Histidine biosynthesis bifunctional protein HisIE (hisI).